Reading from the N-terminus, the 96-residue chain is Protein ORF5 (96 aa).

It belongs to the microviridae C protein family.

Functionally, plays a central role in the packaging of viral DNA into phage procapsid, which occurs in the late stage of infection. Can interact with the replicative complex after the completion of one round of DNA synthesis. When protein ORF5 is bound to the replicative form, the complex becomes accessible to procapsid and serves as a DNA packaging apparatus. This chain is Protein ORF5, found in Chlamydia phage 1 (Bacteriophage Chp1).